A 464-amino-acid chain; its full sequence is UDP-N-acetylmuramoylalanine--D-glutamate ligase (464 aa).

127–133 (GSNGKST) is a binding site for ATP.

Belongs to the MurCDEF family.

Its subcellular location is the cytoplasm. The enzyme catalyses UDP-N-acetyl-alpha-D-muramoyl-L-alanine + D-glutamate + ATP = UDP-N-acetyl-alpha-D-muramoyl-L-alanyl-D-glutamate + ADP + phosphate + H(+). Its pathway is cell wall biogenesis; peptidoglycan biosynthesis. Cell wall formation. Catalyzes the addition of glutamate to the nucleotide precursor UDP-N-acetylmuramoyl-L-alanine (UMA). The polypeptide is UDP-N-acetylmuramoylalanine--D-glutamate ligase (Dinoroseobacter shibae (strain DSM 16493 / NCIMB 14021 / DFL 12)).